A 481-amino-acid polypeptide reads, in one-letter code: Putative F-box/FBD/LRR-repeat protein At5g25850 (481 aa).

The F-box domain maps to 19–69; sequence INRLSQLSDPLICQILSHLPIKEVVTTSVLSTRWKNIWLSVPSLELIYSIF. LRR repeat units follow at residues 123–151, 173–198, and 328–356; these read VRRV…KLFH, VWFP…KIDV, and HVTL…IVAF. An FBD domain is found at 401–452; it reads QLSFSSVPKCLLSSLQFVELNAQILRFDGEILNLAKYFLENSSILQKLTLHP.

The chain is Putative F-box/FBD/LRR-repeat protein At5g25850 from Arabidopsis thaliana (Mouse-ear cress).